A 74-amino-acid chain; its full sequence is Conotoxin Im6.10 (74 aa).

The first 19 residues, M1 to G19, serve as a signal peptide directing secretion. The propeptide occupies S20–R47. Disulfide bonds link C49–C58, C52–C63, and C57–C73.

As to expression, expressed by the venom duct.

The protein localises to the secreted. In terms of biological role, probable neurotoxin. This chain is Conotoxin Im6.10, found in Conus imperialis (Imperial cone).